The sequence spans 867 residues: Cadherin-related family member 1 (867 aa).

A signal peptide spans 1 to 21 (MGRGPPAVLAPWMLFLSLAQA). Residues 22-701 (NFAPHFFDNG…LMQTKDNPMK (680 aa)) are Extracellular-facing. 6 consecutive Cadherin domains span residues 36-135 (NGNM…APRF), 136-247 (IQEP…GPVF), 248-354 (VGTP…PPTF), 360-473 (PQNR…VPKF), 474-577 (TSHY…YPQF), and 574-689 (YPQF…SPMA). Residues Asn-58 and Asn-89 are each glycosylated (N-linked (GlcNAc...) asparagine). N-linked (GlcNAc...) asparagine glycans are attached at residues Asn-288 and Asn-297. A helical membrane pass occupies residues 702–722 (AVGVLAGIMAIIVAITVLIST). Over 723–867 (ATFWRNKKSN…KKNLHSKAYF (145 aa)) the chain is Cytoplasmic. The tract at residues 767–843 (KFVLREAPPN…VAKRKAVGSP (77 aa)) is disordered. Over residues 777 to 786 (ENCNNNSRGS) the composition is skewed to polar residues. Positions 790–802 (PQAPAPPPPPSPA) are enriched in pro residues.

Interacts with PROM1. Post-translationally, undergoes proteolytic cleavage; produces a soluble 95 kDa N-terminal fragment and a 25 kDa cell-associated C-terminal fragment. In terms of tissue distribution, expressed in photoreceptor cells of the outer nuclear layer of the retina.

The protein resides in the cell membrane. Functionally, potential calcium-dependent cell-adhesion protein. May be required for the structural integrity of the outer segment (OS) of photoreceptor cells. The chain is Cadherin-related family member 1 (CDHR1) from Bos taurus (Bovine).